A 175-amino-acid chain; its full sequence is ATP synthase subunit b (175 aa).

A helical transmembrane segment spans residues 19 to 35 (GLIFWTTVTFLIVLFIL).

Belongs to the ATPase B chain family. F-type ATPases have 2 components, F(1) - the catalytic core - and F(0) - the membrane proton channel. F(1) has five subunits: alpha(3), beta(3), gamma(1), delta(1), epsilon(1). F(0) has four main subunits: a(1), b(2) and c(10-14). The alpha and beta chains form an alternating ring which encloses part of the gamma chain. F(1) is attached to F(0) by a central stalk formed by the gamma and epsilon chains, while a peripheral stalk is formed by the delta and b chains.

It is found in the cell inner membrane. Its function is as follows. F(1)F(0) ATP synthase produces ATP from ADP in the presence of a proton or sodium gradient. F-type ATPases consist of two structural domains, F(1) containing the extramembraneous catalytic core and F(0) containing the membrane proton channel, linked together by a central stalk and a peripheral stalk. During catalysis, ATP synthesis in the catalytic domain of F(1) is coupled via a rotary mechanism of the central stalk subunits to proton translocation. Functionally, component of the F(0) channel, it forms part of the peripheral stalk, linking F(1) to F(0). In Chlorobium phaeobacteroides (strain BS1), this protein is ATP synthase subunit b.